A 103-amino-acid polypeptide reads, in one-letter code: Flagellar hook-basal body complex protein FliE (103 aa).

Belongs to the FliE family.

It localises to the bacterial flagellum basal body. The chain is Flagellar hook-basal body complex protein FliE from Photorhabdus laumondii subsp. laumondii (strain DSM 15139 / CIP 105565 / TT01) (Photorhabdus luminescens subsp. laumondii).